The following is a 195-amino-acid chain: Probable GTP-binding protein EngB (195 aa).

Positions 24-195 (GLKEVALAGR…MIFNAIEKYL (172 aa)) constitute an EngB-type G domain. Residues 32 to 39 (GRSNVGKS), 59 to 63 (GKTQT), 77 to 80 (DVPG), 144 to 147 (TKED), and 176 to 178 (YTA) each bind GTP. Mg(2+) is bound by residues S39 and T61.

Belongs to the TRAFAC class TrmE-Era-EngA-EngB-Septin-like GTPase superfamily. EngB GTPase family. Mg(2+) serves as cofactor.

Its function is as follows. Necessary for normal cell division and for the maintenance of normal septation. In Macrococcus caseolyticus (strain JCSC5402) (Macrococcoides caseolyticum), this protein is Probable GTP-binding protein EngB.